Consider the following 333-residue polypeptide: Oxidoreductase AN1596 (333 aa).

It belongs to the NmrA-type oxidoreductase family.

It participates in secondary metabolite biosynthesis; terpenoid biosynthesis. Its function is as follows. Oxidoreductase; part of the gene cluster that mediates the biosynthesis of the diterpene ent-pimara-8(14),15-diene (PD). Within the cluster, the HMG-CoA reductase AN1593 functions in the mevalonate pathway, which produces isoprenoid precursors. The geranylgeranyl pyrophosphate (GGPP) synthase AN1592 is needed in the formation of GGPP, the precursor for diterpenes. Lastly, the pimaradiene synthase pbcA performs the 2 cyclization steps that convert GGPP to ent-pimara-8(14),15-diene. The putative roles of the remaining cluster enzymes in ent-pimara-8(14),15-diene biosynthesis is unclear. The cytochrome P450 monooxygenase AN1598, the glutathione S-transferase AN1595, the oxidoreductases AN1596 and AN1597 probably function as decorative enzymes. It is possible that in biological conditions the compound is oxidized to ent-pimara-8(14),15-dien-19-oic acid, which is a bioactive diterpene compound predominant in many plant extracts. This is Oxidoreductase AN1596 from Emericella nidulans (strain FGSC A4 / ATCC 38163 / CBS 112.46 / NRRL 194 / M139) (Aspergillus nidulans).